The primary structure comprises 223 residues: Small ribosomal subunit protein uS3 (223 aa).

The KH type-2 domain occupies 39 to 117 (IREHLRKKPS…RPELNAKLVA (79 aa)).

It belongs to the universal ribosomal protein uS3 family. As to quaternary structure, part of the 30S ribosomal subunit. Forms a tight complex with proteins S10 and S14.

Binds the lower part of the 30S subunit head. Binds mRNA in the 70S ribosome, positioning it for translation. This Chlamydia felis (strain Fe/C-56) (Chlamydophila felis) protein is Small ribosomal subunit protein uS3.